Reading from the N-terminus, the 49-residue chain is Large ribosomal subunit protein bL33B (49 aa).

It belongs to the bacterial ribosomal protein bL33 family.

The protein is Large ribosomal subunit protein bL33B of Oceanobacillus iheyensis (strain DSM 14371 / CIP 107618 / JCM 11309 / KCTC 3954 / HTE831).